The chain runs to 170 residues: NADH-quinone oxidoreductase subunit E (170 aa).

[2Fe-2S] cluster is bound by residues Cys-93, Cys-98, Cys-134, and Cys-138.

The protein belongs to the complex I 24 kDa subunit family. [2Fe-2S] cluster serves as cofactor.

The catalysed reaction is a quinone + NADH + 5 H(+)(in) = a quinol + NAD(+) + 4 H(+)(out). Functionally, NDH-1 shuttles electrons from NADH, via FMN and iron-sulfur (Fe-S) centers, to quinones in the respiratory chain. Couples the redox reaction to proton translocation (for every two electrons transferred, four hydrogen ions are translocated across the cytoplasmic membrane), and thus conserves the redox energy in a proton gradient. This Rickettsia typhi (strain ATCC VR-144 / Wilmington) protein is NADH-quinone oxidoreductase subunit E (nuoE).